Reading from the N-terminus, the 154-residue chain is Lipoprotein signal peptidase (154 aa).

3 helical membrane-spanning segments follow: residues 8 to 28, 58 to 78, and 88 to 108; these read LYLI…NYIV, IFSG…AVVI, and NGLF…NFID. Residues D117 and D133 contribute to the active site. A helical transmembrane segment spans residues 131–151; it reads IADSAITVGIILVFIYLIFIS.

Belongs to the peptidase A8 family.

The protein resides in the cell membrane. The enzyme catalyses Release of signal peptides from bacterial membrane prolipoproteins. Hydrolyzes -Xaa-Yaa-Zaa-|-(S,diacylglyceryl)Cys-, in which Xaa is hydrophobic (preferably Leu), and Yaa (Ala or Ser) and Zaa (Gly or Ala) have small, neutral side chains.. It functions in the pathway protein modification; lipoprotein biosynthesis (signal peptide cleavage). In terms of biological role, this protein specifically catalyzes the removal of signal peptides from prolipoproteins. This chain is Lipoprotein signal peptidase, found in Lactobacillus johnsonii (strain CNCM I-12250 / La1 / NCC 533).